The sequence spans 256 residues: Trypsin alpha (256 aa).

A signal peptide spans 1–22 (MLKIVILLSAVVCALGGTVPEG). Positions 23 to 30 (LLPQLDGR) are cleaved as a propeptide — activation peptide. A Peptidase S1 domain is found at 31 to 254 (IVGGSATTIS…LRSWVISTAN (224 aa)). C56 and C72 are oxidised to a cystine. Catalysis depends on charge relay system residues H71 and D116. Intrachain disulfides connect C180–C197 and C206–C230. S210 acts as the Charge relay system in catalysis.

Belongs to the peptidase S1 family.

The protein resides in the secreted. It localises to the extracellular space. It carries out the reaction Preferential cleavage: Arg-|-Xaa, Lys-|-Xaa.. This chain is Trypsin alpha (alphaTry), found in Drosophila erecta (Fruit fly).